A 266-amino-acid polypeptide reads, in one-letter code: tRNA (guanine-N(1)-)-methyltransferase (266 aa).

Residues glycine 113 and 137–142 contribute to the S-adenosyl-L-methionine site; that span reads LGDYVL.

Belongs to the RNA methyltransferase TrmD family. As to quaternary structure, homodimer.

It localises to the cytoplasm. The catalysed reaction is guanosine(37) in tRNA + S-adenosyl-L-methionine = N(1)-methylguanosine(37) in tRNA + S-adenosyl-L-homocysteine + H(+). Specifically methylates guanosine-37 in various tRNAs. This is tRNA (guanine-N(1)-)-methyltransferase from Paenarthrobacter aurescens (strain TC1).